Here is a 600-residue protein sequence, read N- to C-terminus: Aspartate--tRNA ligase (600 aa).

Residue E175 participates in L-aspartate binding. Residues 199 to 202 (QLFK) are aspartate. An L-aspartate-binding site is contributed by R221. ATP contacts are provided by residues 221–223 (RDE) and Q230. L-aspartate is bound at residue H448. E484 is a binding site for ATP. R491 contacts L-aspartate. 536 to 539 (GLDR) contacts ATP.

This sequence belongs to the class-II aminoacyl-tRNA synthetase family. Type 1 subfamily. Homodimer.

Its subcellular location is the cytoplasm. It carries out the reaction tRNA(Asp) + L-aspartate + ATP = L-aspartyl-tRNA(Asp) + AMP + diphosphate. Functionally, catalyzes the attachment of L-aspartate to tRNA(Asp) in a two-step reaction: L-aspartate is first activated by ATP to form Asp-AMP and then transferred to the acceptor end of tRNA(Asp). This chain is Aspartate--tRNA ligase, found in Limosilactobacillus reuteri (strain DSM 20016) (Lactobacillus reuteri).